The primary structure comprises 434 residues: MSQHASSSSWTSFLKSISSFNGDLSSLSAPPFILSPTSLTEFSQYWAEHPALFLEPSLIDGENYKDHCPFDPNVESKEVAQMLAVVRWFISTLRSQYCSRSESMGSEKKPLNPFLGEVFVGKWKNDEHPEFGETVLLSEQVSHHPPMTAFSIFNEKNDVSVQGYNQIKTGFTKTLTLTVKPYGHVILKIKDETYLITTPPLHIEGILVASPFVELGGRSFIQSSNGMLCVIEFSGRGYFTGKKNSFKARIYRSPQEHSHKENALYLISGQWSGVSTIIKKDSQVSHQFYDSSETPTEHLLVKPIEEQHPLESRRAWKDVAEAIRQGNISMIKKTKEELENKQRALREQERVKGVEWQRRWFKQVDYMNENTSNDVEKASEDDAFRKLASKLQLSVKNVPSGTLIGGKDDKKDVSTALHWRFDKNLWMRENEITI.

An OSBP-related domain (ORD) region spans residues 18–371 (SSFNGDLSSL…KQVDYMNENT (354 aa)). A 1,2-diacyl-sn-glycero-3-phospho-(1D-myo-inositol 4-phosphate) is bound at residue 24–29 (LSSLSA). Q96 contributes to the 20-hydroxycholesterol binding site. Residue Q96 coordinates 25-hydroxycholesterol. 7beta-hydroxycholesterol-binding residues include Q96 and R100. Position 96 (Q96) interacts with cholesterol. Residue Q96 participates in ergosterol binding. Residues 109-112 (KPLN), 143-144 (HH), K335, E339, and R343 contribute to the a 1,2-diacyl-sn-glycero-3-phospho-(1D-myo-inositol 4-phosphate) site. S389 bears the Phosphoserine mark.

It belongs to the OSBP family.

Its subcellular location is the vacuole membrane. The protein localises to the bud neck. Lipid transport protein (LTP) involved in non-vesicular transfer of lipids between membranes. Functions in phosphoinositide-coupled directional transport of various lipids by carrying the lipid molecule in a hydrophobic pocket and transferring it between membranes through the cytosol. Involved in maintenance of intracellular sterol distribution and homeostasis. Plays a role in ergosterol synthesis. Binds and transports sterol. May be involved in ergosterol transport from the plasma membrane (PM) to the ER. The sequence is that of Oxysterol-binding protein homolog 5 from Saccharomyces cerevisiae (strain ATCC 204508 / S288c) (Baker's yeast).